Reading from the N-terminus, the 215-residue chain is Ribosomal RNA small subunit methyltransferase G (215 aa).

S-adenosyl-L-methionine is bound by residues G77, F82, 130-131 (IE), and R146.

This sequence belongs to the methyltransferase superfamily. RNA methyltransferase RsmG family.

The protein resides in the cytoplasm. The enzyme catalyses guanosine(527) in 16S rRNA + S-adenosyl-L-methionine = N(7)-methylguanosine(527) in 16S rRNA + S-adenosyl-L-homocysteine. Functionally, specifically methylates the N7 position of guanine in position 527 of 16S rRNA. The chain is Ribosomal RNA small subunit methyltransferase G from Bartonella henselae (strain ATCC 49882 / DSM 28221 / CCUG 30454 / Houston 1) (Rochalimaea henselae).